A 572-amino-acid chain; its full sequence is Proline--tRNA ligase (572 aa).

Belongs to the class-II aminoacyl-tRNA synthetase family. ProS type 1 subfamily. In terms of assembly, homodimer. May form a tertiary complex with YbaK and t-RNA(Pro).

Its subcellular location is the cytoplasm. It carries out the reaction tRNA(Pro) + L-proline + ATP = L-prolyl-tRNA(Pro) + AMP + diphosphate. In terms of biological role, catalyzes the attachment of proline to tRNA(Pro) in a two-step reaction: proline is first activated by ATP to form Pro-AMP and then transferred to the acceptor end of tRNA(Pro). As ProRS can inadvertently accommodate and process non-cognate amino acids such as alanine and cysteine, to avoid such errors it has two additional distinct editing activities against alanine. One activity is designated as 'pretransfer' editing and involves the tRNA(Pro)-independent hydrolysis of activated Ala-AMP. The other activity is designated 'posttransfer' editing and involves deacylation of mischarged Ala-tRNA(Pro). The misacylated Cys-tRNA(Pro) is not edited by ProRS, but is probably edited in trans by YbaK. The chain is Proline--tRNA ligase from Haemophilus influenzae (strain ATCC 51907 / DSM 11121 / KW20 / Rd).